We begin with the raw amino-acid sequence, 383 residues long: Chromatin structure-remodeling complex subunit SFH1 (383 aa).

The interval 61 to 80 (DDDEKVHSDNGKGEGEEVGH) is disordered. Positions 64–80 (EKVHSDNGKGEGEEVGH) are enriched in basic and acidic residues.

The protein belongs to the SNF5 family.

Its subcellular location is the nucleus. Part of the chromatin structure-remodeling complex (RSC) which is involved in transcription regulation and nucleosome positioning. RSC is responsible for the transfer of a histone octamer from a nucleosome core particle to naked DNA. The reaction requires ATP and involves an activated RSC-nucleosome intermediate. Remodeling reaction also involves DNA translocation, DNA twist and conformational change. As a reconfigurer of centromeric and flanking nucleosomes, RSC complex is required both for proper kinetochore function in chromosome segregation and, via a PKC1-dependent signaling pathway, for organization of the cellular cytoskeleton. This subunit is essential for mitotic growth and required for cell cycle progression. The protein is Chromatin structure-remodeling complex subunit SFH1 (SFH1) of Eremothecium gossypii (strain ATCC 10895 / CBS 109.51 / FGSC 9923 / NRRL Y-1056) (Yeast).